The sequence spans 764 residues: Irregular chiasm C-roughest protein (764 aa).

Positions 1 to 19 (MLHTMQLLLLATIVGMVRS) are cleaved as a signal peptide. At 20–533 (SPYTSYQNQR…QAKKSVSLLM (514 aa)) the chain is on the extracellular side. Ig-like C2-type domains are found at residues 21–120 (PYTS…PAIR), 132–230 (PEAP…AKIR), 237–343 (PKVK…LDIS), 346–419 (PSFR…AEIS), and 430–530 (PAIG…KSVS). 5 disulfide bridges follow: C49/C107, C155/C214, C281/C325, C367/C408, and C450/C508. 5 N-linked (GlcNAc...) asparagine glycosylation sites follow: N211, N313, N393, N400, and N507. The helical transmembrane segment at 534 to 556 (TIVGGISVVAFLLVLTILVVVYI) threads the bilayer. The Cytoplasmic portion of the chain corresponds to 557–764 (KCKKRTKLPP…SSLLPPPTAV (208 aa)). Disordered stretches follow at residues 640 to 660 (HQNQ…HHTQ) and 691 to 719 (NGLP…STTA). The span at 692 to 701 (GLPSLQSTTA) shows a compositional bias: polar residues. Low complexity predominate over residues 702–719 (SVVSSSPNGSCSNQSTTA).

As to expression, postembryonic expression is strong in the developing optic lobe and in the eye imaginal disk.

The protein resides in the membrane. Functionally, required for correct axonal pathway formation in the optic lobe and for programmed cell death in the developing retina. This is Irregular chiasm C-roughest protein (rst) from Drosophila melanogaster (Fruit fly).